The sequence spans 122 residues: Large ribosomal subunit protein uL14 (122 aa).

It belongs to the universal ribosomal protein uL14 family. In terms of assembly, part of the 50S ribosomal subunit. Forms a cluster with proteins L3 and L19. In the 70S ribosome, L14 and L19 interact and together make contacts with the 16S rRNA in bridges B5 and B8.

Functionally, binds to 23S rRNA. Forms part of two intersubunit bridges in the 70S ribosome. This Staphylococcus haemolyticus (strain JCSC1435) protein is Large ribosomal subunit protein uL14.